The primary structure comprises 201 residues: Large ribosomal subunit protein bL25 (201 aa).

Belongs to the bacterial ribosomal protein bL25 family. CTC subfamily. Part of the 50S ribosomal subunit; part of the 5S rRNA/L5/L18/L25 subcomplex. Contacts the 5S rRNA. Binds to the 5S rRNA independently of L5 and L18.

In terms of biological role, this is one of the proteins that binds to the 5S RNA in the ribosome where it forms part of the central protuberance. The polypeptide is Large ribosomal subunit protein bL25 (Burkholderia vietnamiensis (strain G4 / LMG 22486) (Burkholderia cepacia (strain R1808))).